The sequence spans 727 residues: ABC transporter G family member 6 (727 aa).

The ABC transporter domain maps to 68–333 (LSFTDLTYSV…FAEFGHPIPE (266 aa)). 126–133 (GASGSGKS) contributes to the ATP binding site. In terms of domain architecture, ABC transmembrane type-2 spans 421–631 (VELAVLAKRS…PYEAVLLNEF (211 aa)). The next 6 helical transmembrane spans lie at 440 to 460 (LFGI…TMFW), 475 to 495 (CFAF…PVFL), 517 to 537 (LSHS…FAAI), 560 to 580 (ASFW…PHVM), 581 to 601 (LGYT…GFFI), and 700 to 720 (LWVT…SLLL).

This sequence belongs to the ABC transporter superfamily. ABCG family. Eye pigment precursor importer (TC 3.A.1.204) subfamily.

Its subcellular location is the membrane. This is ABC transporter G family member 6 (ABCG6) from Arabidopsis thaliana (Mouse-ear cress).